Consider the following 250-residue polypeptide: uncharacterized protein (250 aa).

4Fe-4S ferredoxin-type domains are found at residues 38-67 (KLLY…KAKV), 69-98 (KSAK…VIEG), 124-153 (KKYE…AVRR), 154-183 (KSIE…VERE), 191-220 (RDIE…QDGD), and 220-249 (DKVK…MWEK). [4Fe-4S] cluster contacts are provided by Cys47, Cys50, Cys53, Cys57, Cys78, Cys81, Cys84, Cys88, Cys133, Cys136, Cys139, Cys143, Cys163, Cys166, Cys169, Cys173, Cys200, Cys203, Cys206, Cys210, Cys229, Cys232, Cys235, and Cys239.

This is an uncharacterized protein from Methanocaldococcus jannaschii (strain ATCC 43067 / DSM 2661 / JAL-1 / JCM 10045 / NBRC 100440) (Methanococcus jannaschii).